The sequence spans 209 residues: MISPSKKRTILSSKNINQKPRAVVKGNELRSPSKRRSQIDTDYALRRSPIKTIQISKAAQFMLYEETAEERNIAVHRHNEIYNNNNSVSNENNPSQVKENLSPAKICPYERAFLREGGRIALKDLSVDEFKGYIQDPLTDETIPLTLPLGDKKISLPSFITPPRNSKISIFFTSKHQGQNPETKISRSTDDVSEKKVVRKLSFHVYEDE.

A disordered region spans residues 1-38 (MISPSKKRTILSSKNINQKPRAVVKGNELRSPSKRRSQ). Ser-48 bears the Phosphoserine mark. Position 161 is a phosphothreonine (Thr-161). Ser-202 carries the post-translational modification Phosphoserine.

In terms of assembly, interacts with CDH1, BMH1 and BMH2.

Functionally, negative regulator of GDH1, the activator protein that regulates the ubiquitin ligase activity and substrate specificity of the anaphase promoting complex/cyclosome (APC/C), and which is required for exit from mitosis, cytokinesis and formation of prereplicative complexes in G1. The chain is APC/C-CDH1 modulator 1 (ACM1) from Saccharomyces cerevisiae (strain ATCC 204508 / S288c) (Baker's yeast).